A 1370-amino-acid chain; its full sequence is Putative surface protein SA2285 (1370 aa).

A signal peptide spans 1–50; it reads MRDKKGPVNKRVDFLSNKLNKYSIRKFTVGTASILIGSLMYLGTQQEAEA. 3 disordered regions span residues 77–116, 439–472, and 495–1344; these read NKDT…EDTP, KFNP…NPLT, and EYGP…TGLE. 24 stretches are compositionally biased toward basic and acidic residues: residues 96–116, 450–460, 504–522, 553–569, 578–588, 605–618, 632–650, 681–697, 706–716, 733–746, 760–778, 809–825, 834–844, 861–874, 888–906, 937–953, 962–972, 989–1002, 1016–1034, 1065–1081, 1090–1100, 1117–1130, 1174–1185, and 1202–1221; these read DTIE…EDTP, KVTREGQKGEK, GHRD…EEVP, SIVE…RKFN, SKGE…KDPI, SKGE…KDPV, KVIEEPVDDVIK, and FETK…RVKQ. The G5 1 domain occupies 418 to 500; that stretch reads SAKNNNRIRK…NELTEYGPET (83 aa). The region spanning 546-628 is the G5 2 domain; that stretch reads YGPVKGDSIV…NELTEYGPET (83 aa). The 83-residue stretch at 674–756 folds into the G5 3 domain; the sequence is YGPVKGDSIV…NELTEYGPET (83 aa). The G5 4 domain occupies 802 to 884; that stretch reads YGPVKGDSIV…NELTEYGPET (83 aa). The G5 5 domain occupies 930-1012; that stretch reads YGPVKGDSIV…NELTEYGPET (83 aa). Residues 1058–1140 enclose the G5 6 domain; it reads YGPVKGDSIV…NELTEFGGEK (83 aa). The G5 7 domain occupies 1186 to 1268; the sequence is HGPKTGTPET…DKIVEFGGEK (83 aa). Over residues 1224-1238 the composition is skewed to polar residues; sequence QPGSKTITTPITVNP. Positions 1252–1282 are enriched in basic and acidic residues; the sequence is EITKQPVDKIVEFGGEKPKDPKGPENPEKPS. Positions 1338–1342 match the LPXTG sorting signal motif; it reads LPKTG. At Thr-1341 the chain carries Pentaglycyl murein peptidoglycan amidated threonine. A propeptide spans 1342–1370 (removed by sortase); it reads GLESTQKGLIFSSIIGIAGLMLLARRRKN.

It is found in the secreted. The protein localises to the cell wall. The sequence is that of Putative surface protein SA2285 from Staphylococcus aureus (strain N315).